The sequence spans 253 residues: 4-phosphopantoate--beta-alanine ligase (253 aa).

ATP contacts are provided by residues Arg17, Arg39, Asp179 to Asn181, Arg185 to Thr186, and Asn197 to Leu198.

The protein belongs to the archaeal phosphopantothenate synthetase family. In terms of assembly, homodimer.

The enzyme catalyses (R)-4-phosphopantoate + beta-alanine + ATP = (R)-4'-phosphopantothenate + AMP + diphosphate + H(+). Its pathway is cofactor biosynthesis; coenzyme A biosynthesis. Catalyzes the condensation of (R)-4-phosphopantoate and beta-alanine to 4'-phosphopantothenate in the CoA biosynthesis pathway. The protein is 4-phosphopantoate--beta-alanine ligase of Methanosarcina mazei (strain ATCC BAA-159 / DSM 3647 / Goe1 / Go1 / JCM 11833 / OCM 88) (Methanosarcina frisia).